A 206-amino-acid chain; its full sequence is Large ribosomal subunit protein uL4 (206 aa).

This sequence belongs to the universal ribosomal protein uL4 family. Part of the 50S ribosomal subunit.

Functionally, one of the primary rRNA binding proteins, this protein initially binds near the 5'-end of the 23S rRNA. It is important during the early stages of 50S assembly. It makes multiple contacts with different domains of the 23S rRNA in the assembled 50S subunit and ribosome. In terms of biological role, forms part of the polypeptide exit tunnel. This chain is Large ribosomal subunit protein uL4, found in Bradyrhizobium diazoefficiens (strain JCM 10833 / BCRC 13528 / IAM 13628 / NBRC 14792 / USDA 110).